A 467-amino-acid polypeptide reads, in one-letter code: MAQKLVAQGGETGDVWDDGVYDNVTKVYVGQGQYGIAFVKFEYANGSEVVVGDEHGEKTELGVEEFEIDSDDYIVYVEGYREKVSDMTSEMITFLSFKTSKGKTSQPIVKKPGVKFVLHGGKIVGFHGRSTDVLHSLGAYVSLPSTPKLLGNWIKVEQNGEGPGLRCSHGIAQVGNKIYSFGGELIPNQPIDKHLYVFDLETRTWSIAPATGDVPHLSCLGVRMVSVGSTLYTFGGRDFSRQYNGFYSFDTTTNEWKLLTPVEEGPTPRSFHSMAADEENVYVFGGVGAMDRIKTLDSYNIVDKTWFHCSNPGDSFSIRGGAGLEVVQGKVWIVYGFNGCEVDDVHFYDPAEDKWTQVETFGVKPNERSVFASAAIGKHIVIFGGEIAMDPRAHVGPGQLIDGTFALDTETLQWERLDKFEGTPSSRGWTASTTGTIDGKKGLVMHGGKAPTNDRFDDLFFYGIDSV.

Residues 2–143 (AQKLVAQGGE…LHSLGAYVSL (142 aa)) form the Jacalin-type lectin domain. 5 Kelch repeats span residues 177 to 225 (KIYS…VRMV), 230 to 276 (TLYT…SMAA), 280 to 329 (NVYV…VVQG), 331 to 375 (VWIV…ASAA), and 379 to 434 (HIVI…ASTT). Residue arginine 237 is the Proton donor of the active site. Residues arginine 237, serine 270, arginine 292, glycine 321, and valine 370 each coordinate a (Z)-N-(sulfonatooxy)alkanimidothioate. Arginine 292 acts as the Proton donor in catalysis. Fe(2+) contacts are provided by glutamate 386, aspartate 390, and histidine 394. Tryptophan 429 contributes to the a (Z)-N-(sulfonatooxy)alkanimidothioate binding site.

Belongs to the jacalin lectin family. Fe(2+) is required as a cofactor. As to expression, mainly expressed in roots, and, at low levels, in seedlings and leaves. Observed in seeds.

It catalyses the reaction a (Z)-N-(sulfonatooxy)alkanimidothioate = a nitrile + sulfur + sulfate. The catalysed reaction is (Z)-phenyl-N-(sulfonatooxy)methanimidothioate = phenylacetonitrile + sulfur + sulfate. It carries out the reaction (Z)-N-(sulfonatooxy)prop-2-enimidothioate = but-3-enenitrile + sulfur + sulfate. Specifier protein responsible for constitutive and herbivore-induced simple nitrile formation, especially in roots. Promotes simple nitriles, but not epithionitrile or thiocyanate formation. Converts allylglucosinolate and benzylglucosinolate (glucotropaeolin) to their corresponding simple nitriles in the presence of myrosinase. This Arabidopsis thaliana (Mouse-ear cress) protein is Thiohydroximate-O-sulfate sulfur/sulfate-lyase (nitrile-forming) NSP3.